The chain runs to 363 residues: Dihydroorotate dehydrogenase (quinone) (363 aa).

FMN-binding positions include 62-66 (AGYDK) and T86. Residue K66 participates in substrate binding. 111–115 (NRLGF) serves as a coordination point for substrate. FMN contacts are provided by N139 and N170. Substrate is bound at residue N170. S173 serves as the catalytic Nucleophile. N175 is a binding site for substrate. Residues K215 and S243 each contribute to the FMN site. 244-245 (NT) is a substrate binding site. Residues G266, G295, and 316–317 (YS) each bind FMN.

Belongs to the dihydroorotate dehydrogenase family. Type 2 subfamily. Monomer. Requires FMN as cofactor.

It localises to the cell membrane. It catalyses the reaction (S)-dihydroorotate + a quinone = orotate + a quinol. It participates in pyrimidine metabolism; UMP biosynthesis via de novo pathway; orotate from (S)-dihydroorotate (quinone route): step 1/1. In terms of biological role, catalyzes the conversion of dihydroorotate to orotate with quinone as electron acceptor. In Agrobacterium fabrum (strain C58 / ATCC 33970) (Agrobacterium tumefaciens (strain C58)), this protein is Dihydroorotate dehydrogenase (quinone).